The following is an 810-amino-acid chain: DNA gyrase subunit A (810 aa).

Positions Leu36 to Leu502 constitute a Topo IIA-type catalytic domain. Tyr124 serves as the catalytic O-(5'-phospho-DNA)-tyrosine intermediate. A GyrA-box motif is present at residues Gln529–Gly535.

This sequence belongs to the type II topoisomerase GyrA/ParC subunit family. Heterotetramer, composed of two GyrA and two GyrB chains. In the heterotetramer, GyrA contains the active site tyrosine that forms a transient covalent intermediate with DNA, while GyrB binds cofactors and catalyzes ATP hydrolysis.

It localises to the cytoplasm. It catalyses the reaction ATP-dependent breakage, passage and rejoining of double-stranded DNA.. A type II topoisomerase that negatively supercoils closed circular double-stranded (ds) DNA in an ATP-dependent manner to modulate DNA topology and maintain chromosomes in an underwound state. Negative supercoiling favors strand separation, and DNA replication, transcription, recombination and repair, all of which involve strand separation. Also able to catalyze the interconversion of other topological isomers of dsDNA rings, including catenanes and knotted rings. Type II topoisomerases break and join 2 DNA strands simultaneously in an ATP-dependent manner. The polypeptide is DNA gyrase subunit A (Borrelia hermsii (strain HS1 / DAH)).